A 648-amino-acid chain; its full sequence is Spastin (648 aa).

Residues 1–40 are Cytoplasmic-facing; that stretch reads MASTVALLRDSSDDRENFDDGETDCVQVGRKRKLTVFFYP. The segment at residues 41–61 is an intramembrane region (helical); that stretch reads LLLVFWLLRWVFYQFFLVLCF. Residues 62–648 lie on the Cytoplasmic side of the membrane; the sequence is VCRGFVPRRH…WNREFGDITV (587 aa). Positions 99-174 constitute an MIT domain; it reads HKKAFDFISK…EMARDRLDFL (76 aa). Positions 188–346 are disordered; the sequence is PWHGGVAPAQ…SQRSLLSSRV (159 aa). Residues 247-266 show a composition bias toward low complexity; that stretch reads TGVTLRRQQQQQLGGVSTVS. Residue 414–421 coordinates ATP; sequence GPPGNGKT.

This sequence belongs to the AAA ATPase family. Spastin subfamily. As to quaternary structure, homohexamer. The homohexamer is stabilized by ATP-binding. The homohexamer may adopt a ring conformation through which microtubules pass prior to being severed. Interacts with microtubules.

The protein localises to the membrane. It localises to the cytoplasm. The protein resides in the cytoskeleton. Its subcellular location is the microtubule organizing center. It is found in the centrosome. It catalyses the reaction n ATP + n H2O + a microtubule = n ADP + n phosphate + (n+1) alpha/beta tubulin heterodimers.. Functionally, ATP-dependent microtubule severing protein. Microtubule severing may promote reorganization of cellular microtubule arrays and the release of microtubules from the microtubule organizing center following nucleation. The sequence is that of Spastin (spas) from Ixodes scapularis (Black-legged tick).